An 82-amino-acid polypeptide reads, in one-letter code: Turripeptide Lol6.1 (82 aa).

The signal sequence occupies residues 1-23 (MRFHWIPTLTVLLVLSMSFGTEA). Residues 24–48 (IPXXXXXXXXXXXXXXXXXXXXXXX) constitute a propeptide that is removed on maturation. Intrachain disulfides connect cysteine 54/cysteine 66, cysteine 58/cysteine 71, and cysteine 65/cysteine 77.

As to expression, expressed by the venom duct.

Its subcellular location is the secreted. Functionally, acts as a neurotoxin by inhibiting an ion channel. This Iotyrris olangoensis (Sea snail) protein is Turripeptide Lol6.1.